An 873-amino-acid polypeptide reads, in one-letter code: Mitogen-activated protein kinase kinase kinase kinase 3 (873 aa).

At methionine 1 the chain carries N-acetylmethionine. One can recognise a Protein kinase domain in the interval 16-273 (FELIQRIGSG…AEKLLQHPFV (258 aa)). ATP-binding positions include 22-30 (IGSGTYGDV) and lysine 45. Catalysis depends on aspartate 136, which acts as the Proton acceptor. 2 positions are modified to phosphoserine: serine 329 and serine 377. Residues 389-518 (AHLEDDEGDD…KPISNGLPPT (130 aa)) are disordered. A compositionally biased stretch (pro residues) spans 452 to 466 (HVPPRPPPPRLPPQK). Over residues 487-499 (VHQQQSEQRGTNL) the composition is skewed to polar residues. A CNH domain is found at 535 to 846 (PLKIHCATSW…IFRLLGSDRV (312 aa)).

Belongs to the protein kinase superfamily. STE Ser/Thr protein kinase family. STE20 subfamily. Interacts with SH3GL2. Interaction appears to regulate MAP4K3-mediated JNK activation. Mg(2+) is required as a cofactor.

The enzyme catalyses L-seryl-[protein] + ATP = O-phospho-L-seryl-[protein] + ADP + H(+). It carries out the reaction L-threonyl-[protein] + ATP = O-phospho-L-threonyl-[protein] + ADP + H(+). Serine/threonine kinase that plays a role in the response to environmental stress. Appears to act upstream of the JUN N-terminal pathway. Activator of the Hippo signaling pathway which plays a pivotal role in organ size control and tumor suppression by restricting proliferation and promoting apoptosis. MAP4Ks act in parallel to and are partially redundant with STK3/MST2 and STK4/MST2 in the phosphorylation and activation of LATS1/2, and establish MAP4Ks as components of the expanded Hippo pathway. This chain is Mitogen-activated protein kinase kinase kinase kinase 3 (Map4k3), found in Rattus norvegicus (Rat).